Here is a 147-residue protein sequence, read N- to C-terminus: Large ribosomal subunit protein uL13 (147 aa).

The segment at 127-147 (GPEHPHSAQQPKVLEIQGAAR) is disordered.

It belongs to the universal ribosomal protein uL13 family. As to quaternary structure, part of the 50S ribosomal subunit.

Its function is as follows. This protein is one of the early assembly proteins of the 50S ribosomal subunit, although it is not seen to bind rRNA by itself. It is important during the early stages of 50S assembly. The polypeptide is Large ribosomal subunit protein uL13 (Verminephrobacter eiseniae (strain EF01-2)).